The following is a 348-amino-acid chain: MAADGDWQDFYEFQEPAGSVQEQENCNASPEAGAGAHAGGDSFPALASSLEEKLSLCFRPTSEAEPPRAAVRPITECSLLQGDEIWNALTDNYGNVMPVDWKSSHTRTLHLLTLNLSEKGMNDGLLFDASDEEELREQLDMHSIIVSCVNEEPLFTADQVIEEIEEMMQESPDPEDDETPTQSDRLSMLSQEIQTLKRSSMSSYEERVKRLSVSELNELLEEIEAAIKQYSEELVQQLALRDELEFEKEVENSFISALIEVQNKQKEHKETAKKKKKLKSGSSQNGRSERSHMPGTYLTTVIPYEKKSGPPSVEDLQILTKILHAMKEDSEKVPSLLTDYILKVLCPT.

A disordered region spans residues 11–40 (YEFQEPAGSVQEQENCNASPEAGAGAHAGG). Phosphoserine occurs at positions 130, 171, and 190. The stretch at 206–280 (ERVKRLSVSE…TAKKKKKLKS (75 aa)) forms a coiled coil. A disordered region spans residues 265-296 (QKEHKETAKKKKKLKSGSSQNGRSERSHMPGT).

It belongs to the zygin family. In terms of assembly, homodimer; disulfide-linked. May form heterodimers with FEZ1. Interacts with synaptotagmin.

Involved in axonal outgrowth and fasciculation. The polypeptide is Fasciculation and elongation protein zeta-2 (Fez2) (Mus musculus (Mouse)).